The following is a 192-amino-acid chain: Crossover junction endodeoxyribonuclease RuvC (192 aa).

Residues aspartate 20, glutamate 80, and aspartate 153 contribute to the active site. Mg(2+) contacts are provided by aspartate 20, glutamate 80, and aspartate 153.

It belongs to the RuvC family. In terms of assembly, homodimer which binds Holliday junction (HJ) DNA. The HJ becomes 2-fold symmetrical on binding to RuvC with unstacked arms; it has a different conformation from HJ DNA in complex with RuvA. In the full resolvosome a probable DNA-RuvA(4)-RuvB(12)-RuvC(2) complex forms which resolves the HJ. Mg(2+) serves as cofactor.

It localises to the cytoplasm. The catalysed reaction is Endonucleolytic cleavage at a junction such as a reciprocal single-stranded crossover between two homologous DNA duplexes (Holliday junction).. In terms of biological role, the RuvA-RuvB-RuvC complex processes Holliday junction (HJ) DNA during genetic recombination and DNA repair. Endonuclease that resolves HJ intermediates. Cleaves cruciform DNA by making single-stranded nicks across the HJ at symmetrical positions within the homologous arms, yielding a 5'-phosphate and a 3'-hydroxyl group; requires a central core of homology in the junction. The consensus cleavage sequence is 5'-(A/T)TT(C/G)-3'. Cleavage occurs on the 3'-side of the TT dinucleotide at the point of strand exchange. HJ branch migration catalyzed by RuvA-RuvB allows RuvC to scan DNA until it finds its consensus sequence, where it cleaves and resolves the cruciform DNA. The polypeptide is Crossover junction endodeoxyribonuclease RuvC (Christiangramia forsetii (strain DSM 17595 / CGMCC 1.15422 / KT0803) (Gramella forsetii)).